Here is a 435-residue protein sequence, read N- to C-terminus: Gamma-glutamyl phosphate reductase (435 aa).

This sequence belongs to the gamma-glutamyl phosphate reductase family.

It is found in the cytoplasm. The catalysed reaction is L-glutamate 5-semialdehyde + phosphate + NADP(+) = L-glutamyl 5-phosphate + NADPH + H(+). The protein operates within amino-acid biosynthesis; L-proline biosynthesis; L-glutamate 5-semialdehyde from L-glutamate: step 2/2. In terms of biological role, catalyzes the NADPH-dependent reduction of L-glutamate 5-phosphate into L-glutamate 5-semialdehyde and phosphate. The product spontaneously undergoes cyclization to form 1-pyrroline-5-carboxylate. The polypeptide is Gamma-glutamyl phosphate reductase (Parasynechococcus marenigrum (strain WH8102)).